A 237-amino-acid chain; its full sequence is Ribonuclease PH (237 aa).

Phosphate-binding positions include Arg86 and 124-126; that span reads GTR.

It belongs to the RNase PH family. In terms of assembly, homohexameric ring arranged as a trimer of dimers.

The enzyme catalyses tRNA(n+1) + phosphate = tRNA(n) + a ribonucleoside 5'-diphosphate. Phosphorolytic 3'-5' exoribonuclease that plays an important role in tRNA 3'-end maturation. Removes nucleotide residues following the 3'-CCA terminus of tRNAs; can also add nucleotides to the ends of RNA molecules by using nucleoside diphosphates as substrates, but this may not be physiologically important. Probably plays a role in initiation of 16S rRNA degradation (leading to ribosome degradation) during starvation. In Erythrobacter litoralis (strain HTCC2594), this protein is Ribonuclease PH.